Consider the following 306-residue polypeptide: Pentalenolactone F synthase (306 aa).

Fe cation-binding residues include histidine 110 and aspartate 112. Residues threonine 138 and tryptophan 258 each coordinate 2-oxoglutarate. Fe cation is bound at residue histidine 273. Arginine 284 contacts 2-oxoglutarate.

This sequence belongs to the TfdA dioxygenase family. It depends on Fe(2+) as a cofactor.

It catalyses the reaction pentalenolactone D + 2 2-oxoglutarate + 2 O2 = pentalenolactone F + 2 succinate + 2 CO2 + H2O. It participates in antibiotic biosynthesis; neopentalenolactone biosynthesis. Activated by ascorbate. Catalyzes the Fe(2+) and alpha-ketoglutarate-dependent oxidation of pentalenolactone D to pentalenolactone F. Also able to catalyze the oxidation of pentalenolactone D to pentalenolactone E. In presence of neopentalenolactone D, mediates production of PL308 and possibly neopentalenolactone E. The chain is Pentalenolactone F synthase (ptlD) from Streptomyces avermitilis (strain ATCC 31267 / DSM 46492 / JCM 5070 / NBRC 14893 / NCIMB 12804 / NRRL 8165 / MA-4680).